The chain runs to 250 residues: Probable transcriptional regulatory protein Cag_0165 (250 aa).

Belongs to the TACO1 family.

Its subcellular location is the cytoplasm. This Chlorobium chlorochromatii (strain CaD3) protein is Probable transcriptional regulatory protein Cag_0165.